The following is a 158-amino-acid chain: Ribosomal RNA large subunit methyltransferase H (158 aa).

S-adenosyl-L-methionine is bound by residues L74, G105, and 124–129; that span reads LGPLTL.

This sequence belongs to the RNA methyltransferase RlmH family. Homodimer.

The protein resides in the cytoplasm. It carries out the reaction pseudouridine(1915) in 23S rRNA + S-adenosyl-L-methionine = N(3)-methylpseudouridine(1915) in 23S rRNA + S-adenosyl-L-homocysteine + H(+). Functionally, specifically methylates the pseudouridine at position 1915 (m3Psi1915) in 23S rRNA. The chain is Ribosomal RNA large subunit methyltransferase H from Xylella fastidiosa (strain Temecula1 / ATCC 700964).